The chain runs to 218 residues: Glutathione S-transferase Mu 1 (218 aa).

One can recognise a GST N-terminal domain in the interval proline 2 to glycine 88. Residues tyrosine 7–tryptophan 8, tryptophan 46–lysine 50, asparagine 59–leucine 60, and glutamine 72–serine 73 each bind glutathione. The region spanning threonine 90 to valine 208 is the GST C-terminal domain. Tyrosine 116 provides a ligand contact to substrate.

Belongs to the GST superfamily. Mu family. As to quaternary structure, homodimer. Well expressed in rabbit liver, brain and kidney.

Its subcellular location is the cytoplasm. It carries out the reaction RX + glutathione = an S-substituted glutathione + a halide anion + H(+). In terms of biological role, conjugation of reduced glutathione to a wide number of exogenous and endogenous hydrophobic electrophiles. This Oryctolagus cuniculus (Rabbit) protein is Glutathione S-transferase Mu 1.